The sequence spans 457 residues: Acetylcholine receptor subunit alpha-1-A (457 aa).

The signal sequence occupies residues 1–20; that stretch reads MDFVLTRLILLFLAATIIYS. Topologically, residues 21-230 are extracellular; it reads SEDESRLIND…ITYHFLLQRL (210 aa). 2 cysteine pairs are disulfide-bonded: cysteine 148–cysteine 162 and cysteine 212–cysteine 213. A glycan (N-linked (GlcNAc...) asparagine) is linked at asparagine 161. 3 consecutive transmembrane segments (helical) span residues 231 to 255, 263 to 281, and 297 to 316; these read PLYFIVNVVIPCLLFSFLTGLVFYL, ITLSVSVLLSLVVFLLVIV, and YMLFTMVFVIASIVITVIVI. The Cytoplasmic segment spans residues 317–428; that stretch reads NTHHRSPSTH…WKFVAMVLDH (112 aa). The chain crosses the membrane as a helical span at residues 429–447; that stretch reads LLLAVFMIVCIIGTLAIFA.

This sequence belongs to the ligand-gated ion channel (TC 1.A.9) family. Acetylcholine receptor (TC 1.A.9.1) subfamily. Alpha-1/CHRNA1 sub-subfamily. As to quaternary structure, one of the alpha chains that assemble within the acetylcholine receptor, a pentamer of two alpha chains, a beta, a delta, and a gamma or epsilon chains. In terms of tissue distribution, oocytes.

It is found in the postsynaptic cell membrane. Its subcellular location is the cell membrane. It carries out the reaction K(+)(in) = K(+)(out). It catalyses the reaction Na(+)(in) = Na(+)(out). Its function is as follows. Upon acetylcholine binding, the AChR responds by an extensive change in conformation that affects all subunits and leads to opening of an ion-conducting channel across the plasma membrane. In Xenopus laevis (African clawed frog), this protein is Acetylcholine receptor subunit alpha-1-A (chrna1-a).